A 101-amino-acid polypeptide reads, in one-letter code: Phosphoribosyl-AMP cyclohydrolase (101 aa).

Aspartate 71 contacts Mg(2+). Cysteine 72 contributes to the Zn(2+) binding site. Mg(2+) contacts are provided by aspartate 73 and aspartate 75. Positions 88 and 95 each coordinate Zn(2+).

Belongs to the PRA-CH family. In terms of assembly, homodimer. Requires Mg(2+) as cofactor. The cofactor is Zn(2+).

The protein localises to the cytoplasm. The enzyme catalyses 1-(5-phospho-beta-D-ribosyl)-5'-AMP + H2O = 1-(5-phospho-beta-D-ribosyl)-5-[(5-phospho-beta-D-ribosylamino)methylideneamino]imidazole-4-carboxamide. It functions in the pathway amino-acid biosynthesis; L-histidine biosynthesis; L-histidine from 5-phospho-alpha-D-ribose 1-diphosphate: step 3/9. Functionally, catalyzes the hydrolysis of the adenine ring of phosphoribosyl-AMP. This is Phosphoribosyl-AMP cyclohydrolase from Bacillus cereus (strain G9842).